The chain runs to 164 residues: Large ribosomal subunit protein uL10 (164 aa).

It belongs to the universal ribosomal protein uL10 family. As to quaternary structure, part of the ribosomal stalk of the 50S ribosomal subunit. The N-terminus interacts with L11 and the large rRNA to form the base of the stalk. The C-terminus forms an elongated spine to which L12 dimers bind in a sequential fashion forming a multimeric L10(L12)X complex.

Functionally, forms part of the ribosomal stalk, playing a central role in the interaction of the ribosome with GTP-bound translation factors. The sequence is that of Large ribosomal subunit protein uL10 from Pseudoalteromonas translucida (strain TAC 125).